Here is a 120-residue protein sequence, read N- to C-terminus: Holo-[acyl-carrier-protein] synthase (120 aa).

2 residues coordinate Mg(2+): Asp-8 and Glu-60.

This sequence belongs to the P-Pant transferase superfamily. AcpS family. Mg(2+) serves as cofactor.

It is found in the cytoplasm. The enzyme catalyses apo-[ACP] + CoA = holo-[ACP] + adenosine 3',5'-bisphosphate + H(+). Transfers the 4'-phosphopantetheine moiety from coenzyme A to a Ser of acyl-carrier-protein. The chain is Holo-[acyl-carrier-protein] synthase from Anaplasma marginale (strain Florida).